The primary structure comprises 191 residues: UPF0312 protein Pmen_0419 (191 aa).

An N-terminal signal peptide occupies residues methionine 1–alanine 22.

It belongs to the UPF0312 family. Type 1 subfamily.

Its subcellular location is the periplasm. The chain is UPF0312 protein Pmen_0419 from Ectopseudomonas mendocina (strain ymp) (Pseudomonas mendocina).